A 414-amino-acid polypeptide reads, in one-letter code: Glutamyl-tRNA reductase (414 aa).

Substrate contacts are provided by residues 51-54 (TCNR), Ser107, 112-114 (EYE), and Gln118. The active-site Nucleophile is the Cys52. NADP(+) is bound at residue 187–192 (GAGEIG).

This sequence belongs to the glutamyl-tRNA reductase family. Homodimer.

It catalyses the reaction (S)-4-amino-5-oxopentanoate + tRNA(Glu) + NADP(+) = L-glutamyl-tRNA(Glu) + NADPH + H(+). The protein operates within porphyrin-containing compound metabolism; protoporphyrin-IX biosynthesis; 5-aminolevulinate from L-glutamyl-tRNA(Glu): step 1/2. Functionally, catalyzes the NADPH-dependent reduction of glutamyl-tRNA(Glu) to glutamate 1-semialdehyde (GSA). This chain is Glutamyl-tRNA reductase, found in Sulfolobus acidocaldarius (strain ATCC 33909 / DSM 639 / JCM 8929 / NBRC 15157 / NCIMB 11770).